The chain runs to 244 residues: Cell division protein DivIB (244 aa).

Over 1–6 the chain is Cytoplasmic; it reads MKIKWP. Residues 7–27 form a helical membrane-spanning segment; sequence LQLWISLAVFVTIAVGTLLLL. The POTRA domain occupies 28 to 104; it reads QPWQTIKTVT…IDIAEKVTAG (77 aa). Residues 28–244 lie on the Extracellular side of the membrane; sequence QPWQTIKTVT…KADNKAHQKQ (217 aa).

Belongs to the FtsQ/DivIB family. DivIB subfamily.

The protein localises to the cell membrane. Its function is as follows. Cell division protein that may be involved in stabilizing or promoting the assembly of the division complex. The protein is Cell division protein DivIB of Leuconostoc kimchii (strain IMSNU 11154 / KCTC 2386 / IH25).